The sequence spans 858 residues: MSSPTSTPSRRKSKRGRGSNPPTPRGEEVQSPPSQKRRTEDSTSIGELLPMPTSPSGDIQSPLFSSPAPSRHSAHQSELDLSSPLTYGTPSSRVEGTPRSGIRGTPARQRADLGSARKVKQVDLHSDQPAAEELVTSEQSLGQKLVIWGTDVNVAICKEKFQRFVQRFIDPLAKEEENVGLDLNEPIYMQRLEEINVVGEPFLNIDCDHLRSFDQDLYRQLVCYPQEVIPTFDMAANEIFFERYPDSILEHQIQVRPYNALKTRNMRSLNPEDIDQLITISGMVIRTSQIIPEMQESFFKCQVCAFTTRVEIDRGRIAEPSVCKHCNTTHSMALIHNRSMFSDKQMIKLQESPEDMPAGQTPHTTILYAHNDLVDKVQPGDRVNVTGIYRAVPIRVNPRVRNVKSVYKTHIDVIHYRKTDSKRLHGIDEDTEQKMFTEERVAVLKELAAKPDIYERLAAALAPSIYEHEDIKKGILLQLFGGTRKDFSHTGRGKFRAEVNILLCGDPGTSKSQLLQYVYNLVPRGQYTSGKGSSAVGLTAYVMKDPETRQLVLQTGALVLSDNGICCIDEFDKMNESTRSVLHEVMEQQTLSIAKAGIICQLNARTSVLAAANPVESQWNPKKTTIENIQLPHTLLSRFDLIFLMLDPQDETYDRRLAHHLVALYYQSEEQLKEEHLDMAVLKDYIAYARTYVNPRLGEEASQALIEAYVDMRKIGSGRGMVSAYPRQLESLIRLSEAHAKVRFSSKVETIDVEEAKRLHREALKQSATDPRTGIVDISILTTGMSATARKRKEELAQVLKKLIQSKGKTPAFKYQQLFEDLRGQSDAAITKDMFDEALHALADEDYLTVTGKTVRLL.

Residues 1-125 are disordered; it reads MSSPTSTPSR…ARKVKQVDLH (125 aa). Composition is skewed to polar residues over residues 54–68 and 79–94; these read SPSGDIQSPLFSSPA and LDLSSPLTYGTPSSRV. Residues 301-326 form a C4-type zinc finger; sequence CQVCAFTTRVEIDRGRIAEPSVCKHC. Residues 453 to 662 enclose the MCM domain; sequence IYERLAAALA…YDRRLAHHLV (210 aa). Residues Tyr466, Arg492, Lys511, Ser512, Asn613, Arg638, Arg727, and Glu730 each coordinate ATP. The short motif at 637–640 is the Arginine finger element; that stretch reads SRFD.

The protein belongs to the MCM family. Component of the mcm2-7 complex (RLF-M). The complex forms a toroidal hexameric ring with the proposed subunit order mcm2-mcm6-mcm4-mcm7-mcm3-mcm5. The heterodimer of mmcm3/mcm5 interacts with mcm4, mmcm6, mcm7 and weakly with mcm2. Component of the CMG helicase complex, composed of the mcm2-7 complex, the GINS complex and cdc45. Post-translationally, hyperphosphorylated during mitosis in a mechanism requiring cdc2-cyclin B and other kinases. Undergoes dephosphorylation after exiting mitosis, existing in a partially phosphorylated state in the cytosolic interphase mcm complex which associates with the pre-replication complexes (pre-Rcs). Complete dephosphorylation inactivates the mcm complex, preventing its binding to chromatin. Becomes actively phosphorylated during S phase once the mcm complex is assembled on the chromatin. This chromatin-associated phosphorylation occurs during the activation of the pre-Rcs and is independent of cdks. Phosphorylated by the cdc7-dbf4b complex.

It is found in the nucleus. Its subcellular location is the chromosome. The catalysed reaction is ATP + H2O = ADP + phosphate + H(+). Acts as a component of the MCM2-7 complex (MCM complex) which is the replicative helicase essential for 'once per cell cycle' DNA replication initiation and elongation in eukaryotic cells. Core component of CDC45-MCM-GINS (CMG) helicase, the molecular machine that unwinds template DNA during replication, and around which the replisome is built. The active ATPase sites in the MCM2-7 ring are formed through the interaction surfaces of two neighboring subunits such that a critical structure of a conserved arginine finger motif is provided in trans relative to the ATP-binding site of the Walker A box of the adjacent subunit. The six ATPase active sites, however, are likely to contribute differentially to the complex helicase activity. In Xenopus laevis (African clawed frog), this protein is DNA replication licensing factor mcm4-A (mcm4-a).